The sequence spans 338 residues: Nicotinate-nucleotide--dimethylbenzimidazole phosphoribosyltransferase (338 aa).

Glu-306 serves as the catalytic Proton acceptor.

It belongs to the CobT family.

The enzyme catalyses 5,6-dimethylbenzimidazole + nicotinate beta-D-ribonucleotide = alpha-ribazole 5'-phosphate + nicotinate + H(+). Its pathway is nucleoside biosynthesis; alpha-ribazole biosynthesis; alpha-ribazole from 5,6-dimethylbenzimidazole: step 1/2. Catalyzes the synthesis of alpha-ribazole-5'-phosphate from nicotinate mononucleotide (NAMN) and 5,6-dimethylbenzimidazole (DMB). In Cereibacter sphaeroides (strain ATCC 17023 / DSM 158 / JCM 6121 / CCUG 31486 / LMG 2827 / NBRC 12203 / NCIMB 8253 / ATH 2.4.1.) (Rhodobacter sphaeroides), this protein is Nicotinate-nucleotide--dimethylbenzimidazole phosphoribosyltransferase.